A 286-amino-acid polypeptide reads, in one-letter code: Ribosomal RNA small subunit methyltransferase A (286 aa).

Positions 28, 30, 55, 77, 103, and 123 each coordinate S-adenosyl-L-methionine.

It belongs to the class I-like SAM-binding methyltransferase superfamily. rRNA adenine N(6)-methyltransferase family. RsmA subfamily.

It localises to the cytoplasm. The catalysed reaction is adenosine(1518)/adenosine(1519) in 16S rRNA + 4 S-adenosyl-L-methionine = N(6)-dimethyladenosine(1518)/N(6)-dimethyladenosine(1519) in 16S rRNA + 4 S-adenosyl-L-homocysteine + 4 H(+). Functionally, specifically dimethylates two adjacent adenosines (A1518 and A1519) in the loop of a conserved hairpin near the 3'-end of 16S rRNA in the 30S particle. May play a critical role in biogenesis of 30S subunits. The chain is Ribosomal RNA small subunit methyltransferase A from Bradyrhizobium sp. (strain BTAi1 / ATCC BAA-1182).